The following is a 109-amino-acid chain: Small ribosomal subunit protein uS15c (109 aa).

Belongs to the universal ribosomal protein uS15 family. Part of the 30S ribosomal subunit.

The protein resides in the plastid. It is found in the chloroplast. The sequence is that of Small ribosomal subunit protein uS15c (rps15-A) from Trachelium caeruleum (Blue throatwort).